The sequence spans 380 residues: Chorismate synthase (380 aa).

The NADP(+) site is built by arginine 48 and arginine 53. Residues 126 to 128, glycine 284, 299 to 303, and arginine 326 each bind FMN; these read RAS and KPTSS.

The protein belongs to the chorismate synthase family. Requires FMNH2 as cofactor.

The enzyme catalyses 5-O-(1-carboxyvinyl)-3-phosphoshikimate = chorismate + phosphate. It functions in the pathway metabolic intermediate biosynthesis; chorismate biosynthesis; chorismate from D-erythrose 4-phosphate and phosphoenolpyruvate: step 7/7. In terms of biological role, catalyzes the anti-1,4-elimination of the C-3 phosphate and the C-6 proR hydrogen from 5-enolpyruvylshikimate-3-phosphate (EPSP) to yield chorismate, which is the branch point compound that serves as the starting substrate for the three terminal pathways of aromatic amino acid biosynthesis. This reaction introduces a second double bond into the aromatic ring system. This is Chorismate synthase from Ignicoccus hospitalis (strain KIN4/I / DSM 18386 / JCM 14125).